A 644-amino-acid polypeptide reads, in one-letter code: Far upstream element-binding protein 1 (644 aa).

Disordered regions lie at residues 1 to 31 (MADY…NDAF) and 44 to 94 (KIGG…PMHQ). At A2 the chain carries N-acetylalanine. Over residues 14–27 (SAGGGGGGGGGGGV) the composition is skewed to gly residues. Residues S52 and S55 each carry the phosphoserine modification. Residues 65-77 (RPLEDGDQPDAKK) show a composition bias toward basic and acidic residues. Residues 81–94 (QNDSFGTQLPPMHQ) are compositionally biased toward polar residues. 3 consecutive KH domains span residues 100–164 (VMTE…KRLL), 185–251 (NAVQ…KEMV), and 275–339 (NEGI…AEII). The residue at position 140 (S140) is a Phosphoserine. The residue at position 153 (T153) is a Phosphothreonine. Omega-N-methylarginine occurs at positions 321, 359, 361, and 363. The disordered stretch occupies residues 346 to 365 (VQAGNPGGPGPGGRGRGRGQ). The segment covering 350–365 (NPGGPGPGGRGRGRGQ) has biased composition (gly residues). Positions 376–443 (LQEFNFIVPT…QQIDYARQLI (68 aa)) constitute a KH 4 domain. At T432 the chain carries Phosphothreonine. 2 disordered regions span residues 447-532 (IGGP…GTDP) and 548-580 (QAQP…AGQV). The segment covering 468–505 (PHGPPGPPGPGTPMGPYNPAPYNPGPPGPAPHGPPAPY) has biased composition (pro residues). Positions 556-573 (PAGAPTTTQTNGQGDQQN) are enriched in low complexity. S630 is modified (phosphoserine).

Found in a complex with PUF60 and far upstream element (FUSE) DNA segment. Interacts with PUF60 and JTV1. Post-translationally, ubiquitinated. This targets the protein for proteasome-mediated degradation.

The protein localises to the nucleus. In terms of biological role, regulates MYC expression by binding to a single-stranded far-upstream element (FUSE) upstream of the MYC promoter. May act both as activator and repressor of transcription. In Homo sapiens (Human), this protein is Far upstream element-binding protein 1 (FUBP1).